Consider the following 441-residue polypeptide: Ribosomal protein uS12 methylthiotransferase RimO (441 aa).

The region spanning 8–118 (PKIGFVSLGC…VLEHVHHYSP (111 aa)) is the MTTase N-terminal domain. C17, C53, C82, C150, C154, and C157 together coordinate [4Fe-4S] cluster. The Radical SAM core domain occupies 136–373 (LTPRHYAYLK…MQLQQQISAE (238 aa)). In terms of domain architecture, TRAM spans 376–441 (QEKVGREILV…DEYDLWGTRV (66 aa)).

The protein belongs to the methylthiotransferase family. RimO subfamily. It depends on [4Fe-4S] cluster as a cofactor.

The protein resides in the cytoplasm. The enzyme catalyses L-aspartate(89)-[ribosomal protein uS12]-hydrogen + (sulfur carrier)-SH + AH2 + 2 S-adenosyl-L-methionine = 3-methylsulfanyl-L-aspartate(89)-[ribosomal protein uS12]-hydrogen + (sulfur carrier)-H + 5'-deoxyadenosine + L-methionine + A + S-adenosyl-L-homocysteine + 2 H(+). Functionally, catalyzes the methylthiolation of an aspartic acid residue of ribosomal protein uS12. This Klebsiella pneumoniae (strain 342) protein is Ribosomal protein uS12 methylthiotransferase RimO.